The chain runs to 177 residues: Large ribosomal subunit protein uL6 (177 aa).

Belongs to the universal ribosomal protein uL6 family. In terms of assembly, part of the 50S ribosomal subunit.

Its function is as follows. This protein binds to the 23S rRNA, and is important in its secondary structure. It is located near the subunit interface in the base of the L7/L12 stalk, and near the tRNA binding site of the peptidyltransferase center. This is Large ribosomal subunit protein uL6 from Neisseria gonorrhoeae (strain ATCC 700825 / FA 1090).